Here is an 83-residue protein sequence, read N- to C-terminus: Mu-theraphotoxin-Hhn2i (83 aa).

Positions 1–21 (MKASMFLALAGLVLLFVVGYA) are cleaved as a signal peptide. Positions 22–48 (SESEEKEFPRELLSKIFAVDDFKGEER) are excised as a propeptide. 3 cysteine pairs are disulfide-bonded: Cys50–Cys65, Cys57–Cys70, and Cys64–Cys77. Leu81 bears the Leucine amide mark.

The protein belongs to the neurotoxin 10 (Hwtx-1) family. 15 (Hntx-3) subfamily. As to quaternary structure, monomer. Expressed by the venom gland.

It is found in the secreted. Lethal neurotoxin. Selectively blocks tetrodotoxin-sensitive voltage-gated sodium channels (Nav). Does not affect tetrodotoxin-resistant voltage-gated sodium channels or calcium channels. The sequence is that of Mu-theraphotoxin-Hhn2i from Cyriopagopus hainanus (Chinese bird spider).